Reading from the N-terminus, the 741-residue chain is NAD(P)H-quinone oxidoreductase subunit 5, chloroplastic (741 aa).

A run of 16 helical transmembrane segments spans residues 9 to 29, 39 to 59, 89 to 109, 125 to 145, 147 to 167, 185 to 205, 219 to 239, 258 to 278, 280 to 300, 327 to 347, 354 to 374, 396 to 416, 425 to 445, 542 to 562, 605 to 625, and 721 to 741; these read WVIP…LFFI, IWAF…IQLS, IDPL…LVLI, FVYI…SNLI, IYFF…FWFT, GDFG…SLEF, NGIN…GAVA, TPIS…FLLA, LFPL…VGTI, LGYM…FHLI, ALLF…VGYS, TTFL…CFWS, WLYS…TAFY, LFPL…GISF, AISS…LYGS, and ISSY…FFIS.

The protein belongs to the complex I subunit 5 family. NDH is composed of at least 16 different subunits, 5 of which are encoded in the nucleus.

It is found in the plastid. Its subcellular location is the chloroplast thylakoid membrane. The catalysed reaction is a plastoquinone + NADH + (n+1) H(+)(in) = a plastoquinol + NAD(+) + n H(+)(out). It catalyses the reaction a plastoquinone + NADPH + (n+1) H(+)(in) = a plastoquinol + NADP(+) + n H(+)(out). NDH shuttles electrons from NAD(P)H:plastoquinone, via FMN and iron-sulfur (Fe-S) centers, to quinones in the photosynthetic chain and possibly in a chloroplast respiratory chain. The immediate electron acceptor for the enzyme in this species is believed to be plastoquinone. Couples the redox reaction to proton translocation, and thus conserves the redox energy in a proton gradient. The polypeptide is NAD(P)H-quinone oxidoreductase subunit 5, chloroplastic (ndhF) (Lolium perenne (Perennial ryegrass)).